Reading from the N-terminus, the 144-residue chain is Maximins 3/H5 (144 aa).

The N-terminal stretch at 1–18 (MNFKYIFAVSFLIASAYA) is a signal peptide. Propeptides lie at residues 19-43 (RSVQ…REIR) and 74-123 (TAEE…KEKR). Leucine 143 bears the Leucine amide mark.

It belongs to the bombinin family. Expressed by the skin glands.

The protein resides in the secreted. Functionally, maximin-3 shows antibacterial activity against both Gram-positive and Gram-negative bacteria. It also shows antimicrobial activity against the fungus C.albicans, but not against A.flavus nor P.uticale. It has little hemolytic activity. It possess a significant cytotoxicity against tumor cell lines. It possess a significant anti-HIV activity. It shows high spermicidal activity. In terms of biological role, maximin-H5 shows antibacterial activity only against the Gram-positive bacteria S.aureus. The other bacterial and fungal strains tested were resistant to it. The presence of metal ions, like Zn(2+) and Mg(2+), did not increase its antimicrobial potency. Does not show hemolytic activity (in a concentration up to 80 uM). The polypeptide is Maximins 3/H5 (Bombina maxima (Giant fire-bellied toad)).